The chain runs to 192 residues: Adenine phosphoribosyltransferase (192 aa).

This sequence belongs to the purine/pyrimidine phosphoribosyltransferase family. As to quaternary structure, homodimer.

The protein localises to the cytoplasm. The enzyme catalyses AMP + diphosphate = 5-phospho-alpha-D-ribose 1-diphosphate + adenine. It functions in the pathway purine metabolism; AMP biosynthesis via salvage pathway; AMP from adenine: step 1/1. Its function is as follows. Catalyzes a salvage reaction resulting in the formation of AMP, that is energically less costly than de novo synthesis. The sequence is that of Adenine phosphoribosyltransferase from Corynebacterium efficiens (strain DSM 44549 / YS-314 / AJ 12310 / JCM 11189 / NBRC 100395).